Consider the following 386-residue polypeptide: ATP phosphoribosyltransferase regulatory subunit (386 aa).

This sequence belongs to the class-II aminoacyl-tRNA synthetase family. HisZ subfamily. Heteromultimer composed of HisG and HisZ subunits.

Its subcellular location is the cytoplasm. Its pathway is amino-acid biosynthesis; L-histidine biosynthesis; L-histidine from 5-phospho-alpha-D-ribose 1-diphosphate: step 1/9. Functionally, required for the first step of histidine biosynthesis. May allow the feedback regulation of ATP phosphoribosyltransferase activity by histidine. The sequence is that of ATP phosphoribosyltransferase regulatory subunit from Variovorax paradoxus (strain S110).